A 1157-amino-acid chain; its full sequence is Peroxisomal ATPase PEX1 (1157 aa).

Disordered stretches follow at residues 187–221 (SISS…NNGE) and 1135–1157 (SGRD…STLM). The span at 205-217 (SSTSTATGRRSVT) shows a compositional bias: low complexity.

This sequence belongs to the AAA ATPase family. Interacts with PEX6; forming the PEX1-PEX6 AAA ATPase complex, which is composed of a heterohexamer formed by a trimer of PEX1-PEX6 dimers.

The protein localises to the membrane. It catalyses the reaction ATP + H2O = ADP + phosphate + H(+). In terms of biological role, component of the PEX1-PEX6 AAA ATPase complex involved in peroxisome biosynthesis. The complex acts as a protein dislocase complex that mediates the ATP-dependent extraction of the PEX5 receptor from peroxisomal membranes, an essential step for PEX5 recycling. Specifically recognizes PEX5 monoubiquitinated at 'Cys-6', and pulls it out of the peroxisome lumen through the PEX2-PEX10-PEX12 retrotranslocation channel. Extraction by the PEX1-PEX6 AAA ATPase complex is accompanied by unfolding of the TPR repeats and release of bound cargo from PEX5. The protein is Peroxisomal ATPase PEX1 of Komagataella pastoris (Yeast).